Reading from the N-terminus, the 339-residue chain is NmrA-like family domain-containing oxidoreductase notA (339 aa).

Residues 13 to 18 (GATGAQ), 39 to 43 (RKPDS), 60 to 61 (DG), 81 to 83 (TNS), Lys140, and 164 to 167 (YMGI) each bind NADP(+).

It belongs to the NmrA-type oxidoreductase family.

In terms of biological role, nmrA-like family domain-containing oxidoreductase; part of the gene cluster that mediates the biosynthesis of notoamide, a fungal indole alkaloid that belongs to a family of natural products containing a characteristic bicyclo[2.2.2]diazaoctane core. The first step of notoamide biosynthesis involves coupling of L-proline and L-tryptophan by the bimodular NRPS notE, to produce cyclo-L-tryptophan-L-proline called brevianamide F. The reverse prenyltransferase notF then acts as a deoxybrevianamide E synthase and converts brevianamide F to deoxybrevianamide E via reverse prenylation at C-2 of the indole ring leading to the bicyclo[2.2.2]diazaoctane core. Deoxybrevianamide E is further hydroxylated at C-6 of the indole ring, likely catalyzed by the cytochrome P450 monooxygenase notG, to yield 6-hydroxy-deoxybrevianamide E. 6-hydroxy-deoxybrevianamide E is a specific substrate of the prenyltransferase notC for normal prenylation at C-7 to produce 6-hydroxy-7-prenyl-deoxybrevianamide, also called notoamide S. As the proposed pivotal branching point in notoamide biosynthesis, notoamide S can be diverted to notoamide E through an oxidative pyran ring closure putatively catalyzed by either notH cytochrome P450 monooxygenase or the notD FAD-linked oxidoreductase. This step would be followed by an indole 2,3-epoxidation-initiated pinacol-like rearrangement catalyzed by the notB FAD-dependent monooxygenase leading to the formation of notoamide C and notoamide D. On the other hand notoamide S is converted to notoamide T by notH (or notD), a bifunctional oxidase that also functions as the intramolecular Diels-Alderase responsible for generation of (+)-notoamide T. To generate antipodal (-)-notoaminide T, notH' (or notD') in Aspergillus versicolor is expected to catalyze a Diels-Alder reaction leading to the opposite stereochemistry. The remaining oxidoreductase notD (or notH) likely catalyzes the oxidative pyran ring formation to yield (+)-stephacidin A. The FAD-dependent monooxygenase notI is highly similar to notB and is predicted to catalyze a similar conversion from (+)-stephacidin A to (-)-notoamide B via the 2,3-epoxidation of (+)-stephacidin A followed by a pinacol-type rearrangement. Finally, it remains unclear which enzyme could be responsible for the final hydroxylation steps leading to notoamide A and sclerotiamide. The protein is NmrA-like family domain-containing oxidoreductase notA of Aspergillus sp. (strain MF297-2).